The sequence spans 225 residues: uncharacterized protein (225 aa).

A disordered region spans residues Met-1–Val-48. Over residues Pro-20 to Asp-29 the composition is skewed to basic and acidic residues. The 73-residue stretch at Gly-64–His-136 folds into the HTH merR-type domain. Residues Asp-201–Gly-225 are disordered. The segment covering Arg-216 to Gly-225 has biased composition (basic residues).

This is an uncharacterized protein from Mycobacterium tuberculosis (strain CDC 1551 / Oshkosh).